The chain runs to 218 residues: Thiopurine S-methyltransferase (218 aa).

Positions 10, 45, 66, and 123 each coordinate S-adenosyl-L-methionine.

It belongs to the class I-like SAM-binding methyltransferase superfamily. TPMT family.

It is found in the cytoplasm. It catalyses the reaction S-adenosyl-L-methionine + a thiopurine = S-adenosyl-L-homocysteine + a thiopurine S-methylether.. This chain is Thiopurine S-methyltransferase, found in Xanthomonas axonopodis pv. citri (strain 306).